The following is a 486-amino-acid chain: Aspartyl/glutamyl-tRNA(Asn/Gln) amidotransferase subunit B (486 aa).

The protein belongs to the GatB/GatE family. GatB subfamily. In terms of assembly, heterotrimer of A, B and C subunits.

The catalysed reaction is L-glutamyl-tRNA(Gln) + L-glutamine + ATP + H2O = L-glutaminyl-tRNA(Gln) + L-glutamate + ADP + phosphate + H(+). It catalyses the reaction L-aspartyl-tRNA(Asn) + L-glutamine + ATP + H2O = L-asparaginyl-tRNA(Asn) + L-glutamate + ADP + phosphate + 2 H(+). In terms of biological role, allows the formation of correctly charged Asn-tRNA(Asn) or Gln-tRNA(Gln) through the transamidation of misacylated Asp-tRNA(Asn) or Glu-tRNA(Gln) in organisms which lack either or both of asparaginyl-tRNA or glutaminyl-tRNA synthetases. The reaction takes place in the presence of glutamine and ATP through an activated phospho-Asp-tRNA(Asn) or phospho-Glu-tRNA(Gln). The sequence is that of Aspartyl/glutamyl-tRNA(Asn/Gln) amidotransferase subunit B from Herminiimonas arsenicoxydans.